Consider the following 316-residue polypeptide: Thymidylate synthase (316 aa).

DUMP-binding positions include Arg23 and 178 to 179 (RR). Catalysis depends on Cys198, which acts as the Nucleophile. DUMP contacts are provided by residues 218–221 (RSGD), Asn229, and 259–261 (HIY). A (6R)-5,10-methylene-5,6,7,8-tetrahydrofolate-binding site is contributed by Asp221. Ala315 is a (6R)-5,10-methylene-5,6,7,8-tetrahydrofolate binding site.

The protein belongs to the thymidylate synthase family. Bacterial-type ThyA subfamily. Homodimer.

The protein resides in the cytoplasm. The enzyme catalyses dUMP + (6R)-5,10-methylene-5,6,7,8-tetrahydrofolate = 7,8-dihydrofolate + dTMP. It functions in the pathway pyrimidine metabolism; dTTP biosynthesis. In terms of biological role, catalyzes the reductive methylation of 2'-deoxyuridine-5'-monophosphate (dUMP) to 2'-deoxythymidine-5'-monophosphate (dTMP) while utilizing 5,10-methylenetetrahydrofolate (mTHF) as the methyl donor and reductant in the reaction, yielding dihydrofolate (DHF) as a by-product. This enzymatic reaction provides an intracellular de novo source of dTMP, an essential precursor for DNA biosynthesis. This is Thymidylate synthase from Pediococcus pentosaceus (strain ATCC 25745 / CCUG 21536 / LMG 10740 / 183-1w).